The sequence spans 126 residues: Large ribosomal subunit protein bL12 (126 aa).

The protein belongs to the bacterial ribosomal protein bL12 family. Homodimer. Part of the ribosomal stalk of the 50S ribosomal subunit. Forms a multimeric L10(L12)X complex, where L10 forms an elongated spine to which 2 to 4 L12 dimers bind in a sequential fashion. Binds GTP-bound translation factors.

In terms of biological role, forms part of the ribosomal stalk which helps the ribosome interact with GTP-bound translation factors. Is thus essential for accurate translation. This is Large ribosomal subunit protein bL12 from Paracidovorax citrulli (strain AAC00-1) (Acidovorax citrulli).